Here is a 43-residue protein sequence, read N- to C-terminus: MFTNSIKNLIIYLMPLMVTLMLLSVSFVDAGKKPSGPNPGGNN.

An N-terminal signal peptide occupies residues 1 to 30 (MFTNSIKNLIIYLMPLMVTLMLLSVSFVDA). The short motif at 31-43 (GKKPSGPNPGGNN) is the CLE element.

The protein belongs to the CLV3/ESR signal peptide family. As to expression, highly expressed exclusively within the subventral esophageal gland cell during syncytium formation in host plants.

The protein localises to the secreted. It localises to the host cytoplasm. It is found in the host extracellular space. In terms of biological role, plays a role in the differentiation or division of feeding cells (syncytia) induced in plant roots during infection. Promotes host root growth. In Meloidogyne arenaria (Peanut root-knot nematode), this protein is CLAVATA3/ESR (CLE)-related protein 16D10 (16D10).